Reading from the N-terminus, the 384-residue chain is Probable L-tyrosine/L-aspartate decarboxylase (384 aa).

The residue at position 233 (lysine 233) is an N6-(pyridoxal phosphate)lysine.

This sequence belongs to the group II decarboxylase family. MfnA subfamily. Requires pyridoxal 5'-phosphate as cofactor.

The catalysed reaction is L-tyrosine + H(+) = tyramine + CO2. It catalyses the reaction L-aspartate + H(+) = beta-alanine + CO2. The protein operates within cofactor biosynthesis; methanofuran biosynthesis. Its pathway is cofactor biosynthesis; coenzyme A biosynthesis. Functionally, catalyzes the decarboxylation of L-tyrosine to produce tyramine for methanofuran biosynthesis. Can also catalyze the decarboxylation of L-aspartate to produce beta-alanine for coenzyme A (CoA) biosynthesis. The sequence is that of Probable L-tyrosine/L-aspartate decarboxylase from Methanococcus maripaludis (strain DSM 14266 / JCM 13030 / NBRC 101832 / S2 / LL).